The primary structure comprises 1631 residues: Ras GTPase-activating-like protein IQGAP3 (1631 aa).

In terms of domain architecture, Calponin-homology (CH) spans 34–149 (LCRLEEAKRW…YCIHALSLFL (116 aa)). Tyrosine 162 carries the phosphotyrosine modification. Serine 539 carries the post-translational modification Phosphoserine. 4 IQ domains span residues 730–759 (NVGF…FLRT), 760–789 (WLPA…YFKA), 790–819 (NLDA…YFQK), and 820–849 (NVNS…APHP). The region spanning 1004–1253 (YLLLQLFKTA…LKFRKFIHRA (250 aa)) is the Ras-GAP domain. Residue serine 1424 is modified to Phosphoserine.

This chain is Ras GTPase-activating-like protein IQGAP3 (IQGAP3), found in Homo sapiens (Human).